The primary structure comprises 957 residues: Glycine dehydrogenase (decarboxylating) (957 aa).

Lys-708 is modified (N6-(pyridoxal phosphate)lysine).

Belongs to the GcvP family. The glycine cleavage system is composed of four proteins: P, T, L and H. The cofactor is pyridoxal 5'-phosphate.

It carries out the reaction N(6)-[(R)-lipoyl]-L-lysyl-[glycine-cleavage complex H protein] + glycine + H(+) = N(6)-[(R)-S(8)-aminomethyldihydrolipoyl]-L-lysyl-[glycine-cleavage complex H protein] + CO2. Its function is as follows. The glycine cleavage system catalyzes the degradation of glycine. The P protein binds the alpha-amino group of glycine through its pyridoxal phosphate cofactor; CO(2) is released and the remaining methylamine moiety is then transferred to the lipoamide cofactor of the H protein. This chain is Glycine dehydrogenase (decarboxylating), found in Escherichia coli (strain SE11).